The chain runs to 228 residues: MPRHYAIVPAAGSGSRFGAEKPKQYLDLLGRPLIFHTLAALTASPDIERVWVVLAPDDPWWPRYDWSELGSKLETVRCGGATRAESVSNGLRAAAMVAADDDWVLVHDAARPCLSAAMLDALFAELASDPVGGILAVPVADTLKRADAEQRVGATEPRDGLWQAQTPQMFRYGLLGEALEKCRDVTDEAGAIEAVGLKPKLVRGDSTNLKVTYPADLALAAMILRARK.

This sequence belongs to the IspD/TarI cytidylyltransferase family. IspD subfamily.

The catalysed reaction is 2-C-methyl-D-erythritol 4-phosphate + CTP + H(+) = 4-CDP-2-C-methyl-D-erythritol + diphosphate. It participates in isoprenoid biosynthesis; isopentenyl diphosphate biosynthesis via DXP pathway; isopentenyl diphosphate from 1-deoxy-D-xylulose 5-phosphate: step 2/6. Functionally, catalyzes the formation of 4-diphosphocytidyl-2-C-methyl-D-erythritol from CTP and 2-C-methyl-D-erythritol 4-phosphate (MEP). The polypeptide is 2-C-methyl-D-erythritol 4-phosphate cytidylyltransferase (Dechloromonas aromatica (strain RCB)).